The primary structure comprises 452 residues: Pup--protein ligase (452 aa).

Glu9 provides a ligand contact to Mg(2+). ATP is bound at residue Arg53. Tyr55 is a binding site for Mg(2+). The active-site Proton acceptor is Asp57. Glu63 contributes to the Mg(2+) binding site. The ATP site is built by Thr66 and Trp419.

This sequence belongs to the Pup ligase/Pup deamidase family. Pup-conjugating enzyme subfamily.

It carries out the reaction ATP + [prokaryotic ubiquitin-like protein]-L-glutamate + [protein]-L-lysine = ADP + phosphate + N(6)-([prokaryotic ubiquitin-like protein]-gamma-L-glutamyl)-[protein]-L-lysine.. It functions in the pathway protein degradation; proteasomal Pup-dependent pathway. It participates in protein modification; protein pupylation. Functionally, catalyzes the covalent attachment of the prokaryotic ubiquitin-like protein modifier Pup to the proteasomal substrate proteins, thereby targeting them for proteasomal degradation. This tagging system is termed pupylation. The ligation reaction involves the side-chain carboxylate of the C-terminal glutamate of Pup and the side-chain amino group of a substrate lysine. This is Pup--protein ligase from Mycobacterium sp. (strain JLS).